The following is a 311-amino-acid chain: Protoheme IX farnesyltransferase (311 aa).

The next 9 helical transmembrane spans lie at 32 to 52 (VMSLVVFTALVGLMVSPVPIN), 53 to 73 (PWYGFLAIICIAVGGGGAGAL), 104 to 124 (FIFGMVLSLLSVLVMGSFINW), 125 to 145 (FAAFFLAFTIFFYVVIYTIWL), 153 to 173 (IVIGGASGAFPPMIGWAVTTG), 180 to 200 (FLLFLIIFMWTPPHFWALSLF), 224 to 244 (KQILFYTVLMVLCATAPCFTG), 245 to 265 (LGGVFYGIFSTILGIIFIYFA), and 285 to 305 (FFFSLLYLAAVFGALLIESLV).

It belongs to the UbiA prenyltransferase family. Protoheme IX farnesyltransferase subfamily.

It is found in the cell inner membrane. It carries out the reaction heme b + (2E,6E)-farnesyl diphosphate + H2O = Fe(II)-heme o + diphosphate. It functions in the pathway porphyrin-containing compound metabolism; heme O biosynthesis; heme O from protoheme: step 1/1. Its function is as follows. Converts heme B (protoheme IX) to heme O by substitution of the vinyl group on carbon 2 of heme B porphyrin ring with a hydroxyethyl farnesyl side group. This chain is Protoheme IX farnesyltransferase, found in Bartonella tribocorum (strain CIP 105476 / IBS 506).